The chain runs to 123 residues: MPTIKQLIRNPRQPIRNVTKSPALRGCPQRRGTCTRVYTITPKKPNSALRKVARVRLTSGFEITAYIPGIGHNSQEHSVVLVRGGRVKDLPGVRYHIVRGTLDAVGVKDRQQGRSKYGVKKPK.

Belongs to the universal ribosomal protein uS12 family. Part of the 30S ribosomal subunit.

Its subcellular location is the plastid. The protein resides in the chloroplast. Functionally, with S4 and S5 plays an important role in translational accuracy. Located at the interface of the 30S and 50S subunits. This is Small ribosomal subunit protein uS12cz/uS12cy (rps12-A) from Citrus sinensis (Sweet orange).